A 694-amino-acid chain; its full sequence is MEDRSEEGGDHSEMPSAPSTPPSKRKSKFAGFGKFFKPWKWRKRKSSDSFRETSEVLERKISTRKPREELIKRGLLVEVPEEDGSIPSESPPLRNGHMSVEPANPPEDSGGLKRKTRPDSTGPRPKSGETTVQPCATAEVAPLEPHATAEVSPVQPQASAEVTPVQPLPVSEVAPMQPLPVNEVAPMQPLPVNEVAPKQPHHVSEVASVVSRPTSEVAPVQKVSRDFSKQPLLPPKRPLSISTSVTQESAVAGQKSDSSNRLQSSAPVPTPRTIHPPASSKQPPVPPPKPQNRNSNPLMAELSLALAGSPLSPAGSRPSPPLPPKRAMPPSTDAVTNKENALGPASLPPTPANEIITPSPPSPPASSHIPVSNPPVPPLTLAPPYTEVEKEQSASPIPLHIRIQQALNSPQPLPLLDSSQRAQSLLFMQNDMGPSEEGTRVRSLPVTIELLKVPDDEDDESLEDESLSPESSESHTSKVYIGDVPSVTVIPSYLPTCVQEEEEGGVSDTDSEGPVLYRDDEEEEEEEETSALANKVKRKDTLAMKLSGRMASEDSNSEFPQRSREEWNQIRQDIGTQLNRRLSQRPTAEELEQRNILQKNEADRLAEKKEIKRRLTRKLSQRPTVAELVERKILRFNEYVEATDAHDYDRRADKPWTRLTPADKAAIRKELNEFKSTEMAVHAESKHFTRFHRP.

2 stretches are compositionally biased toward basic and acidic residues: residues 1 to 13 and 46 to 72; these read MEDR…DHSE and SSDS…ELIK. 5 disordered regions span residues 1–29, 42–169, 192–403, 426–445, and 450–572; these read MEDR…KSKF, RKRK…QPLP, VNEV…HIRI, LFMQ…RSLP, and LLKV…QIRQ. The stretch at 55-80 is one RPEL 1 repeat; the sequence is EVLERKISTRKPREELIKRGLLVEVP. Polar residues predominate over residues 240–267; it reads SISTSVTQESAVAGQKSDSSNRLQSSAP. Over residues 300–317 the composition is skewed to low complexity; sequence AELSLALAGSPLSPAGSR. 2 stretches are compositionally biased toward pro residues: residues 318–327 and 372–381; these read PSPPLPPKRA and SNPPVPPLTL. 3 stretches are compositionally biased toward acidic residues: residues 455–467, 499–511, and 519–529; these read DDED…DESL, QEEE…DTDS, and DDEEEEEEEET. RPEL repeat units follow at residues 576 to 601 and 613 to 638; these read TQLN…QKNE and RRLT…RFNE.

This sequence belongs to the phosphatase and actin regulator family. In terms of assembly, binds ppp1ca and actin.

It localises to the cytoplasm. It is found in the cell projection. The protein resides in the lamellipodium. In terms of biological role, regulator of protein phosphatase 1 (PP1) required for neural tube and optic fissure closure, and enteric neural crest cell (ENCCs) migration during development. Acts as an activator of PP1. During neural tube closure, localizes to the ventral neural tube and activates PP1, leading to down-regulate cell proliferation within cranial neural tissue and the neural retina. Also acts as a regulator of migration of enteric neural crest cells (ENCCs) by activating PP1, leading to repression of the integrin signaling through the rho/rock pathway. The protein is Phosphatase and actin regulator 4-A (phactr4-a) of Xenopus laevis (African clawed frog).